Here is a 37-residue protein sequence, read N- to C-terminus: Antifungal protein 4 (37 aa).

It localises to the secreted. Functionally, possesses antifungal activity against P.infestans but not F.graminearum. The polypeptide is Antifungal protein 4 (Malva parviflora (Little mallow)).